A 291-amino-acid chain; its full sequence is Phosphatidylglycerol--prolipoprotein diacylglyceryl transferase (291 aa).

7 consecutive transmembrane segments (helical) span residues 21 to 41 (VSLHWYGLMYLVGFVFAMWLA), 60 to 80 (LLYAGFLGVFLGGRIGYVLFY), 96 to 116 (WDGGMSFHGGLIGVICVMIWF), 130 to 150 (FIAPLIPFGLGAGRLGNFING), 198 to 218 (SQLYELFLEGIVLFIILNLFI), 225 to 245 (GAVSGLFLIGYGAFRIIVEFF), and 260 to 280 (ISMGQILSIPMIVAGAAMMIW). A 1,2-diacyl-sn-glycero-3-phospho-(1'-sn-glycerol) is bound at residue Arg143.

The protein belongs to the Lgt family.

Its subcellular location is the cell inner membrane. It catalyses the reaction L-cysteinyl-[prolipoprotein] + a 1,2-diacyl-sn-glycero-3-phospho-(1'-sn-glycerol) = an S-1,2-diacyl-sn-glyceryl-L-cysteinyl-[prolipoprotein] + sn-glycerol 1-phosphate + H(+). It participates in protein modification; lipoprotein biosynthesis (diacylglyceryl transfer). In terms of biological role, catalyzes the transfer of the diacylglyceryl group from phosphatidylglycerol to the sulfhydryl group of the N-terminal cysteine of a prolipoprotein, the first step in the formation of mature lipoproteins. This is Phosphatidylglycerol--prolipoprotein diacylglyceryl transferase from Cronobacter sakazakii (strain ATCC BAA-894) (Enterobacter sakazakii).